A 146-amino-acid polypeptide reads, in one-letter code: Large ribosomal subunit protein uL22 (146 aa).

Positions 1–39 are disordered; that stretch reads MAETQTTTPKKKAERRAPPPARARKNRPAAPAPGPHASL.

Belongs to the universal ribosomal protein uL22 family. In terms of assembly, part of the 50S ribosomal subunit.

This protein binds specifically to 23S rRNA; its binding is stimulated by other ribosomal proteins, e.g. L4, L17, and L20. It is important during the early stages of 50S assembly. It makes multiple contacts with different domains of the 23S rRNA in the assembled 50S subunit and ribosome. Its function is as follows. The globular domain of the protein is located near the polypeptide exit tunnel on the outside of the subunit, while an extended beta-hairpin is found that lines the wall of the exit tunnel in the center of the 70S ribosome. This Anaeromyxobacter dehalogenans (strain 2CP-1 / ATCC BAA-258) protein is Large ribosomal subunit protein uL22.